A 129-amino-acid chain; its full sequence is Small ribosomal subunit protein bS6 (129 aa).

A disordered region spans residues 100-129; it reads SIMLKQKEERAPRREERSEAKPEAKSEAAE. Over residues 104 to 129 the composition is skewed to basic and acidic residues; that stretch reads KQKEERAPRREERSEAKPEAKSEAAE.

The protein belongs to the bacterial ribosomal protein bS6 family.

Functionally, binds together with bS18 to 16S ribosomal RNA. This Vibrio parahaemolyticus serotype O3:K6 (strain RIMD 2210633) protein is Small ribosomal subunit protein bS6.